The chain runs to 475 residues: UDP-N-acetylmuramate--L-alanine ligase (475 aa).

125-131 (GTHGKTT) serves as a coordination point for ATP.

The protein belongs to the MurCDEF family.

It localises to the cytoplasm. It carries out the reaction UDP-N-acetyl-alpha-D-muramate + L-alanine + ATP = UDP-N-acetyl-alpha-D-muramoyl-L-alanine + ADP + phosphate + H(+). It participates in cell wall biogenesis; peptidoglycan biosynthesis. Cell wall formation. This chain is UDP-N-acetylmuramate--L-alanine ligase, found in Haemophilus influenzae (strain 86-028NP).